The primary structure comprises 96 residues: UPF0358 protein Aflv_1873 (96 aa).

Belongs to the UPF0358 family.

This Anoxybacillus flavithermus (strain DSM 21510 / WK1) protein is UPF0358 protein Aflv_1873.